The following is a 117-amino-acid chain: Large ribosomal subunit protein bL20 (117 aa).

It belongs to the bacterial ribosomal protein bL20 family.

Binds directly to 23S ribosomal RNA and is necessary for the in vitro assembly process of the 50S ribosomal subunit. It is not involved in the protein synthesizing functions of that subunit. The sequence is that of Large ribosomal subunit protein bL20 from Campylobacter fetus subsp. fetus (strain 82-40).